The primary structure comprises 306 residues: Pantothenate kinase (306 aa).

ATP is bound at residue 91–98; the sequence is GSVAVGKS.

It belongs to the prokaryotic pantothenate kinase family.

The protein resides in the cytoplasm. It carries out the reaction (R)-pantothenate + ATP = (R)-4'-phosphopantothenate + ADP + H(+). The protein operates within cofactor biosynthesis; coenzyme A biosynthesis; CoA from (R)-pantothenate: step 1/5. This is Pantothenate kinase from Streptococcus pyogenes serotype M5 (strain Manfredo).